The sequence spans 264 residues: Zearalenone hydrolase (264 aa).

An AB hydrolase-1 domain is found at 27-207; sequence VLVPDGLGEC…KDLEALRGKP (181 aa). Zearalenone contacts are provided by Gly32, Ser102, and Ser103. The active site involves Ser102. The active site involves Glu126. Residues Trp183, Tyr187, Ser220, and His242 each contribute to the zearalenone site. Residue His242 is part of the active site.

This sequence belongs to the AB hydrolase superfamily. Hydrolase RutD family. Homodimer.

It catalyses the reaction zearalenone + H2O = hydrolyzed zearalenone + H(+). Its function is as follows. Lactonohydrolase that specifically hydrolyzes and deactivates the mycotoxin zearalenone (ZEN) and its zearalenol (ZOL) derivatives. ZHD101 prefers ZEN to ZOL as its substrate, but ZOL, especially the alpha-form, shows higher estrogenic toxicity than ZEN. This chain is Zearalenone hydrolase, found in Bionectria ochroleuca (Gliocladium roseum).